The chain runs to 141 residues: uncharacterized protein (141 aa).

2 helical membrane-spanning segments follow: residues 20-42 (FLVNLPVVICLAAYLVSQVFCLA) and 52-74 (LHLCTFFTFFTSFLLVPLAIFTL).

Its subcellular location is the cell membrane. This is an uncharacterized protein from Archaeoglobus fulgidus (strain ATCC 49558 / DSM 4304 / JCM 9628 / NBRC 100126 / VC-16).